Here is a 196-residue protein sequence, read N- to C-terminus: ATP-dependent Clp protease proteolytic subunit (196 aa).

The active-site Nucleophile is the Ser-101. His-126 is an active-site residue.

Belongs to the peptidase S14 family. As to quaternary structure, component of the chloroplastic Clp protease core complex.

It localises to the plastid. The protein resides in the chloroplast stroma. The catalysed reaction is Hydrolysis of proteins to small peptides in the presence of ATP and magnesium. alpha-casein is the usual test substrate. In the absence of ATP, only oligopeptides shorter than five residues are hydrolyzed (such as succinyl-Leu-Tyr-|-NHMec, and Leu-Tyr-Leu-|-Tyr-Trp, in which cleavage of the -Tyr-|-Leu- and -Tyr-|-Trp bonds also occurs).. Functionally, cleaves peptides in various proteins in a process that requires ATP hydrolysis. Has a chymotrypsin-like activity. Plays a major role in the degradation of misfolded proteins. The protein is ATP-dependent Clp protease proteolytic subunit of Nasturtium officinale (Watercress).